Consider the following 462-residue polypeptide: Signal recognition particle protein (462 aa).

GTP contacts are provided by residues 107 to 114 (GLQGAGKT), 190 to 194 (DTAGR), and 248 to 251 (TKVD).

This sequence belongs to the GTP-binding SRP family. SRP54 subfamily. As to quaternary structure, part of the signal recognition particle protein translocation system, which is composed of SRP and FtsY. SRP is a ribonucleoprotein composed of Ffh and a 4.5S RNA molecule.

Its subcellular location is the cytoplasm. It catalyses the reaction GTP + H2O = GDP + phosphate + H(+). Its function is as follows. Involved in targeting and insertion of nascent membrane proteins into the cytoplasmic membrane. Binds to the hydrophobic signal sequence of the ribosome-nascent chain (RNC) as it emerges from the ribosomes. The SRP-RNC complex is then targeted to the cytoplasmic membrane where it interacts with the SRP receptor FtsY. Interaction with FtsY leads to the transfer of the RNC complex to the Sec translocase for insertion into the membrane, the hydrolysis of GTP by both Ffh and FtsY, and the dissociation of the SRP-FtsY complex into the individual components. The polypeptide is Signal recognition particle protein (Haemophilus influenzae (strain ATCC 51907 / DSM 11121 / KW20 / Rd)).